We begin with the raw amino-acid sequence, 101 residues long: Ubiquitin-related modifier 1 (101 aa).

Residue Gly-101 is modified to 1-thioglycine. Residue Gly-101 forms a Glycyl lysine isopeptide (Gly-Lys) (interchain with K-? in acceptor proteins) linkage.

It belongs to the URM1 family. Post-translationally, C-terminal thiocarboxylation occurs in 2 steps, it is first acyl-adenylated (-COAMP) via the hesA/moeB/thiF part of the MOCS3 homolog, then thiocarboxylated (-COSH) via the rhodanese domain of the MOCS3 homolog.

It localises to the cytoplasm. It functions in the pathway tRNA modification; 5-methoxycarbonylmethyl-2-thiouridine-tRNA biosynthesis. Its function is as follows. Acts as a sulfur carrier required for 2-thiolation of mcm(5)S(2)U at tRNA wobble positions of cytosolic tRNA(Lys), tRNA(Glu) and tRNA(Gln). Serves as sulfur donor in tRNA 2-thiolation reaction by being thiocarboxylated (-COSH) at its C-terminus by MOCS3. The sulfur is then transferred to tRNA to form 2-thiolation of mcm(5)S(2)U. Also acts as a ubiquitin-like protein (UBL) that is covalently conjugated via an isopeptide bond to lysine residues of target proteins. The thiocarboxylated form serves as substrate for conjugation and oxidative stress specifically induces the formation of UBL-protein conjugates. The protein is Ubiquitin-related modifier 1 of Gallus gallus (Chicken).